A 431-amino-acid polypeptide reads, in one-letter code: Enolase (431 aa).

Gln-163 is a (2R)-2-phosphoglycerate binding site. The active-site Proton donor is the Glu-205. Mg(2+) contacts are provided by Asp-242, Glu-288, and Asp-315. Residues Lys-340, Arg-369, Ser-370, and Lys-391 each contribute to the (2R)-2-phosphoglycerate site. The Proton acceptor role is filled by Lys-340.

The protein belongs to the enolase family. Requires Mg(2+) as cofactor.

Its subcellular location is the cytoplasm. It localises to the secreted. The protein localises to the cell surface. It catalyses the reaction (2R)-2-phosphoglycerate = phosphoenolpyruvate + H2O. It participates in carbohydrate degradation; glycolysis; pyruvate from D-glyceraldehyde 3-phosphate: step 4/5. Catalyzes the reversible conversion of 2-phosphoglycerate (2-PG) into phosphoenolpyruvate (PEP). It is essential for the degradation of carbohydrates via glycolysis. This Bacillus cereus (strain AH187) protein is Enolase.